The primary structure comprises 223 residues: tRNA (guanine-N(7)-)-methyltransferase (223 aa).

S-adenosyl-L-methionine is bound by residues D56, D81, D108, and D130. D130 is an active-site residue. The substrate site is built by K134 and D166.

The protein belongs to the class I-like SAM-binding methyltransferase superfamily. TrmB family.

It catalyses the reaction guanosine(46) in tRNA + S-adenosyl-L-methionine = N(7)-methylguanosine(46) in tRNA + S-adenosyl-L-homocysteine. It functions in the pathway tRNA modification; N(7)-methylguanine-tRNA biosynthesis. Its function is as follows. Catalyzes the formation of N(7)-methylguanine at position 46 (m7G46) in tRNA. This chain is tRNA (guanine-N(7)-)-methyltransferase, found in Rubrobacter xylanophilus (strain DSM 9941 / JCM 11954 / NBRC 16129 / PRD-1).